The chain runs to 258 residues: Insulin-like growth factor-binding protein 4 (258 aa).

A signal peptide spans 1–21 (MLSLCLMAALLLAAGPGPSLG). The 81-residue stretch at 23-103 (EAIHCPPCSE…VHGQGVCMEL (81 aa)) folds into the IGFBP N-terminal domain. 6 disulfide bridges follow: C27-C53, C30-C55, C38-C56, C44-C59, C67-C80, and C74-C100. N125 carries an N-linked (GlcNAc...) asparagine glycan. Cystine bridges form between C131–C138, C174–C204, C215–C226, and C228–C249. Positions 171 to 249 (QGSCQSELHR…GLEPKGELDC (79 aa)) constitute a Thyroglobulin type-1 domain. At S255 the chain carries Phosphoserine.

In terms of assembly, binds IGF2 more than IGF1.

The protein localises to the secreted. Functionally, IGF-binding proteins prolong the half-life of the IGFs and have been shown to either inhibit or stimulate the growth promoting effects of the IGFs on cell culture. They alter the interaction of IGFs with their cell surface receptors. This chain is Insulin-like growth factor-binding protein 4 (IGFBP4), found in Bos taurus (Bovine).